Reading from the N-terminus, the 944-residue chain is Protein translocase subunit SecA (944 aa).

ATP contacts are provided by residues Gln77, 95 to 99 (GEGKT), and Asp484. The tract at residues 920-944 (EQEKQTKKKKKKKPHDDETTKVKIG) is disordered. Residues 933–944 (PHDDETTKVKIG) are compositionally biased toward basic and acidic residues.

It belongs to the SecA family. As to quaternary structure, monomer and homodimer. Part of the essential Sec protein translocation apparatus which comprises SecA, SecYEG and auxiliary proteins SecDF. Other proteins may also be involved.

It is found in the cell membrane. It localises to the cytoplasm. The catalysed reaction is ATP + H2O + cellular proteinSide 1 = ADP + phosphate + cellular proteinSide 2.. Part of the Sec protein translocase complex. Interacts with the SecYEG preprotein conducting channel. Has a central role in coupling the hydrolysis of ATP to the transfer of proteins into and across the cell membrane, serving as an ATP-driven molecular motor driving the stepwise translocation of polypeptide chains across the membrane. This Mycoplasma capricolum subsp. capricolum (strain California kid / ATCC 27343 / NCTC 10154) protein is Protein translocase subunit SecA.